A 247-amino-acid polypeptide reads, in one-letter code: Uridylate kinase (247 aa).

Position 18-21 (18-21 (KLSG)) interacts with ATP. Residue G60 coordinates UMP. ATP-binding residues include G61 and R65. UMP-binding positions include D80 and 141 to 148 (TGNPFFTT). The ATP site is built by T168, Y174, and D177.

It belongs to the UMP kinase family. In terms of assembly, homohexamer.

Its subcellular location is the cytoplasm. It catalyses the reaction UMP + ATP = UDP + ADP. Its pathway is pyrimidine metabolism; CTP biosynthesis via de novo pathway; UDP from UMP (UMPK route): step 1/1. Its activity is regulated as follows. Inhibited by UTP. Catalyzes the reversible phosphorylation of UMP to UDP. The sequence is that of Uridylate kinase from Stutzerimonas stutzeri (strain A1501) (Pseudomonas stutzeri).